Reading from the N-terminus, the 281-residue chain is ATP phosphoribosyltransferase (281 aa).

It belongs to the ATP phosphoribosyltransferase family. Long subfamily. Mg(2+) is required as a cofactor.

The protein localises to the cytoplasm. The catalysed reaction is 1-(5-phospho-beta-D-ribosyl)-ATP + diphosphate = 5-phospho-alpha-D-ribose 1-diphosphate + ATP. The protein operates within amino-acid biosynthesis; L-histidine biosynthesis; L-histidine from 5-phospho-alpha-D-ribose 1-diphosphate: step 1/9. With respect to regulation, feedback inhibited by histidine. In terms of biological role, catalyzes the condensation of ATP and 5-phosphoribose 1-diphosphate to form N'-(5'-phosphoribosyl)-ATP (PR-ATP). Has a crucial role in the pathway because the rate of histidine biosynthesis seems to be controlled primarily by regulation of HisG enzymatic activity. In Corynebacterium jeikeium (strain K411), this protein is ATP phosphoribosyltransferase.